Consider the following 166-residue polypeptide: Lipoprotein signal peptidase (166 aa).

A run of 4 helical transmembrane segments spans residues 9 to 29, 37 to 57, 71 to 91, and 100 to 120; these read AGGS…FDQL, VFAY…LVYN, WQRW…CYLL, and FCTA…DRLL. Catalysis depends on residues Asp-126 and Asp-144. A helical transmembrane segment spans residues 136–156; sequence HWPAFNLADSAITIGAALLVF.

It belongs to the peptidase A8 family.

Its subcellular location is the cell inner membrane. It carries out the reaction Release of signal peptides from bacterial membrane prolipoproteins. Hydrolyzes -Xaa-Yaa-Zaa-|-(S,diacylglyceryl)Cys-, in which Xaa is hydrophobic (preferably Leu), and Yaa (Ala or Ser) and Zaa (Gly or Ala) have small, neutral side chains.. It functions in the pathway protein modification; lipoprotein biosynthesis (signal peptide cleavage). In terms of biological role, this protein specifically catalyzes the removal of signal peptides from prolipoproteins. The sequence is that of Lipoprotein signal peptidase from Paraburkholderia phymatum (strain DSM 17167 / CIP 108236 / LMG 21445 / STM815) (Burkholderia phymatum).